The following is a 333-amino-acid chain: Adenosine deaminase (333 aa).

Histidine 12 and histidine 14 together coordinate Zn(2+). Residues histidine 14, aspartate 16, and glycine 170 each contribute to the substrate site. Histidine 197 contributes to the Zn(2+) binding site. Residue glutamate 200 is the Proton donor of the active site. Aspartate 278 is a binding site for Zn(2+). Aspartate 279 contributes to the substrate binding site.

This sequence belongs to the metallo-dependent hydrolases superfamily. Adenosine and AMP deaminases family. Adenosine deaminase subfamily. Zn(2+) is required as a cofactor.

It catalyses the reaction adenosine + H2O + H(+) = inosine + NH4(+). The catalysed reaction is 2'-deoxyadenosine + H2O + H(+) = 2'-deoxyinosine + NH4(+). In terms of biological role, catalyzes the hydrolytic deamination of adenosine and 2-deoxyadenosine. In Klebsiella pneumoniae (strain 342), this protein is Adenosine deaminase.